The primary structure comprises 122 residues: Large ribosomal subunit protein bL19 (122 aa).

It belongs to the bacterial ribosomal protein bL19 family.

In terms of biological role, this protein is located at the 30S-50S ribosomal subunit interface and may play a role in the structure and function of the aminoacyl-tRNA binding site. The protein is Large ribosomal subunit protein bL19 of Prosthecochloris aestuarii (strain DSM 271 / SK 413).